A 213-amino-acid polypeptide reads, in one-letter code: Orotate phosphoribosyltransferase (213 aa).

K25 contacts 5-phospho-alpha-D-ribose 1-diphosphate. 33–34 contacts orotate; it reads FF. Residues 71-72, R98, K99, K102, H104, and 124-132 contribute to the 5-phospho-alpha-D-ribose 1-diphosphate site; these read YK and DDVITSGTA. Orotate contacts are provided by T128 and R156.

It belongs to the purine/pyrimidine phosphoribosyltransferase family. PyrE subfamily. As to quaternary structure, homodimer. The cofactor is Mg(2+).

It catalyses the reaction orotidine 5'-phosphate + diphosphate = orotate + 5-phospho-alpha-D-ribose 1-diphosphate. Its pathway is pyrimidine metabolism; UMP biosynthesis via de novo pathway; UMP from orotate: step 1/2. In terms of biological role, catalyzes the transfer of a ribosyl phosphate group from 5-phosphoribose 1-diphosphate to orotate, leading to the formation of orotidine monophosphate (OMP). In Buchnera aphidicola subsp. Acyrthosiphon pisum (strain 5A), this protein is Orotate phosphoribosyltransferase.